A 110-amino-acid polypeptide reads, in one-letter code: Small ribosomal subunit protein eS25 (110 aa).

The disordered stretch occupies residues 1–39; it reads MPPKAAGGKSKQIQASKAAAKGSSGGAGRKKWSKGRSRE.

Belongs to the eukaryotic ribosomal protein eS25 family.

The polypeptide is Small ribosomal subunit protein eS25 (rps25) (Dictyostelium discoideum (Social amoeba)).